Reading from the N-terminus, the 560-residue chain is DNA ligase B (560 aa).

Lys124 (N6-AMP-lysine intermediate) is an active-site residue.

It belongs to the NAD-dependent DNA ligase family. LigB subfamily.

It carries out the reaction NAD(+) + (deoxyribonucleotide)n-3'-hydroxyl + 5'-phospho-(deoxyribonucleotide)m = (deoxyribonucleotide)n+m + AMP + beta-nicotinamide D-nucleotide.. Catalyzes the formation of phosphodiester linkages between 5'-phosphoryl and 3'-hydroxyl groups in double-stranded DNA using NAD as a coenzyme and as the energy source for the reaction. The polypeptide is DNA ligase B (Escherichia coli (strain SMS-3-5 / SECEC)).